The chain runs to 785 residues: Conserved oligomeric Golgi complex subunit 4 (785 aa).

The disordered stretch occupies residues 1–24 (MADLDSPPKLSGVQQPSEGVGGGR). Ala-2 bears the N-acetylalanine mark. The interval 2–84 (ADLDSPPKLS…VTLHRMGPNL (83 aa)) is interaction with SCFD1. Position 6 is a phosphoserine (Ser-6). The tract at residues 85–153 (QLIEGDAKQL…TALRSEDYEQ (69 aa)) is interaction with STX5. The interval 618–740 (PQVQPWINSF…SQMATILNLE (123 aa)) is d domain. Residues 741–785 (RVTEILDYWGPNSGPLTWRLTPAEVRQVLALRIDFRSEDIKRLRL) are e domain; essential for proper cell surface glycosylation.

This sequence belongs to the COG4 family. In terms of assembly, monomer. Component of the conserved oligomeric Golgi (COG) complex which is composed of eight different subunits and is required for normal Golgi morphology and localization. Mediates interaction of SCFD1 with the COG complex. Interacts with STX5.

The protein resides in the cytoplasm. It localises to the cytosol. It is found in the golgi apparatus membrane. In terms of biological role, required for normal Golgi function. Plays a role in SNARE-pin assembly and Golgi-to-ER retrograde transport via its interaction with SCFD1. This chain is Conserved oligomeric Golgi complex subunit 4 (COG4), found in Homo sapiens (Human).